The sequence spans 155 residues: Superoxide dismutase [Cu-Zn] (155 aa).

Residues His47, His49, and His64 each coordinate Cu cation. The cysteines at positions 58 and 147 are disulfide-linked. The Zn(2+) site is built by His64, His72, His81, and Asp84. His121 is a Cu cation binding site. Arg144 contacts substrate.

The protein belongs to the Cu-Zn superoxide dismutase family. As to quaternary structure, homodimer. The cofactor is Cu cation. Zn(2+) serves as cofactor.

The protein localises to the cytoplasm. It catalyses the reaction 2 superoxide + 2 H(+) = H2O2 + O2. Destroys radicals which are normally produced within the cells and which are toxic to biological systems. This Kluyveromyces lactis (strain ATCC 8585 / CBS 2359 / DSM 70799 / NBRC 1267 / NRRL Y-1140 / WM37) (Yeast) protein is Superoxide dismutase [Cu-Zn] (SOD1).